The sequence spans 448 residues: MREILHIQGGQCGNQIGAKFWEVVCAEHGIDSTGRYEGDNVLQLERVNVYYNEASCGRFVPRAVLMDLEPGTMDSLRSGTYGQIFRPDNFVFGQSGAGNNWAKGHYTEGAELIDSVLDVVRKEAENCDCLQGFQVCHSLGGGTGSGMGTLLISKIREEYPDRMMLTFSVFPSPKVSDTVVEPYNATLSVHQLVENADECMVLDNEALYDICFRTLKLTTPSFGDLNHLISATMSGVTCCLRFPGQLNSDLRKLAVNLIPFPRLHFFMVGFAPLTSRGSQQYRALTVPELTQQMWDAKNMMCAADPRHGRYLTASAMFRGKMSTKEVDEQMINVQNKNSSYFVEWIPNNVKSTVCDIPPTGLKMASTFIGNSTSIQEMFRRVSEQFTAMFRRKAFLHWYTGEGMDEMEFTEAESNMNDLVSEYQQYQDATADEDGYEYEDEEEVGEEDA.

The GTP site is built by Gln11, Glu69, Ser138, Gly142, Thr143, Gly144, Asn204, and Asn226. Glu69 is a Mg(2+) binding site. Residues 429–448 (TADEDGYEYEDEEEVGEEDA) form a disordered region.

The protein belongs to the tubulin family. Dimer of alpha and beta chains. A typical microtubule is a hollow water-filled tube with an outer diameter of 25 nm and an inner diameter of 15 nM. Alpha-beta heterodimers associate head-to-tail to form protofilaments running lengthwise along the microtubule wall with the beta-tubulin subunit facing the microtubule plus end conferring a structural polarity. Microtubules usually have 13 protofilaments but different protofilament numbers can be found in some organisms and specialized cells. Requires Mg(2+) as cofactor.

Its subcellular location is the cytoplasm. It localises to the cytoskeleton. In terms of biological role, tubulin is the major constituent of microtubules, a cylinder consisting of laterally associated linear protofilaments composed of alpha- and beta-tubulin heterodimers. Microtubules grow by the addition of GTP-tubulin dimers to the microtubule end, where a stabilizing cap forms. Below the cap, tubulin dimers are in GDP-bound state, owing to GTPase activity of alpha-tubulin. The sequence is that of Tubulin beta-2 chain (TUBB2) from Lupinus albus (White lupine).